Consider the following 195-residue polypeptide: MELNTHNAEILLSAANKSHYPQDELPEIALAGRSNVGKSSFINTMLNRKNLARTSGKPGKTQLLNFFNIDDKMRFVDVPGYGYARVSKKEREKWGRMIEEYLTTRENLRAVVSLVDLRHDPSADDVQMYEFLKYYEIPVIIVATKADKIPRGKWNKHESAIKKKLNFDPSDDFILFSSVSKEGMDEAWDAILEKL.

The 172-residue stretch at 24–195 (ELPEIALAGR…EAWDAILEKL (172 aa)) folds into the EngB-type G domain. GTP is bound by residues 32–39 (GRSNVGKS), 59–63 (GKTQL), 77–80 (DVPG), 144–147 (TKAD), and 176–178 (FSS). Mg(2+)-binding residues include S39 and T61.

The protein belongs to the TRAFAC class TrmE-Era-EngA-EngB-Septin-like GTPase superfamily. EngB GTPase family. Mg(2+) serves as cofactor.

Its function is as follows. Necessary for normal cell division and for the maintenance of normal septation. The sequence is that of Probable GTP-binding protein EngB from Streptococcus pneumoniae (strain Hungary19A-6).